The following is a 507-amino-acid chain: E3 ubiquitin-protein ligase TRIM31 (507 aa).

An RING-type zinc finger spans residues 16 to 56 (CPICMEILQDPVTIDCGHNFCLQCISQVGKTSEKIQCPLCK). A B box-type zinc finger spans residues 89–130 (KEDSRCQRHKEKLHYFCEQDGAFLCVVCRDSKDHKSHNVTLI). Positions 94, 97, 116, and 122 each coordinate Zn(2+). Coiled-coil stretches lie at residues 176–241 (EKLK…LQSS) and 269–298 (EDLE…DMNA). Residues 315-507 (EKESWSLLQK…VACSHITLSP (193 aa)) form the B30.2/SPRY domain.

This sequence belongs to the TRIM/RBCC family. May form oligomers. Interacts with isoform p52shc of SHC1. Auto-ubiquitinated (in vitro). Highly expressed in the gastrointestrinal tract, with high expression in the small intestine, moderate in the large intestine and weak in the stomach and esophagus.

It localises to the cytoplasm. The protein resides in the mitochondrion. The enzyme catalyses S-ubiquitinyl-[E2 ubiquitin-conjugating enzyme]-L-cysteine + [acceptor protein]-L-lysine = [E2 ubiquitin-conjugating enzyme]-L-cysteine + N(6)-ubiquitinyl-[acceptor protein]-L-lysine.. It functions in the pathway protein modification; protein ubiquitination. Its function is as follows. E3 ubiquitin-protein ligase that acts as a regulator of antiviral immune response and inflammation by mediating ubiquitination of substrates. Acts as a regulator of innate immune defense against viruses by mediating 'Lys-63'-linked ubiquitination of MAVS, promoting MAVS polymerization and formation of three-stranded helical filaments on mitochondria. Acts as a negative regulator of the NLRP3 inflammasome by catalyzing 'Lys-48'-linked ubiquitination of NLRP3, leading to its degradation. Regulator of Src-induced anchorage independent cell growth. The chain is E3 ubiquitin-protein ligase TRIM31 from Mus musculus (Mouse).